A 426-amino-acid chain; its full sequence is Glutamate-1-semialdehyde 2,1-aminomutase (426 aa).

At Lys-265 the chain carries N6-(pyridoxal phosphate)lysine.

It belongs to the class-III pyridoxal-phosphate-dependent aminotransferase family. HemL subfamily. As to quaternary structure, homodimer. Pyridoxal 5'-phosphate serves as cofactor.

The protein resides in the cytoplasm. The enzyme catalyses (S)-4-amino-5-oxopentanoate = 5-aminolevulinate. The protein operates within porphyrin-containing compound metabolism; protoporphyrin-IX biosynthesis; 5-aminolevulinate from L-glutamyl-tRNA(Glu): step 2/2. This Methylococcus capsulatus (strain ATCC 33009 / NCIMB 11132 / Bath) protein is Glutamate-1-semialdehyde 2,1-aminomutase.